The primary structure comprises 586 residues: Putative butyrophilin subfamily 2 member A3 (586 aa).

An N-terminal signal peptide occupies residues 1 to 27 (MEPAAALHFSRPASLLLLLSLCALVSA). Residues 28 to 139 (QVTVVGPTDP…SCNEAILHLV (112 aa)) enclose the Ig-like V-type domain. Topologically, residues 28-246 (QVTVVGPTDP…SFMPSRSPCV (219 aa)) are extracellular. N-linked (GlcNAc...) asparagine glycans are attached at residues Asn45, Asn112, Asn214, and Asn220. Cys50 and Cys123 are oxidised to a cystine. Residues 247–267 (VILPVIMIILMIPIAICIYWI) form a helical membrane-spanning segment. Residues 268-586 (NNLQKEKKDS…VPQLPARKKV (319 aa)) lie on the Cytoplasmic side of the membrane. Residues 281–474 (TFNLCLSLAG…ILICSAFTGA (194 aa)) form the B30.2/SPRY domain.

It belongs to the immunoglobulin superfamily. BTN/MOG family.

It is found in the membrane. This Homo sapiens (Human) protein is Putative butyrophilin subfamily 2 member A3 (BTN2A3P).